Here is a 512-residue protein sequence, read N- to C-terminus: Anaerobic nitric oxide reductase transcription regulator NorR (512 aa).

A Sigma-54 factor interaction domain is found at 190–419; it reads MIGESLAMQE…LEHVISRAAV (230 aa). ATP-binding positions include 218 to 225 and 281 to 290; these read GETGVGKE and ADNGTLFLDE. Residues 487 to 506 constitute a DNA-binding region (H-T-H motif); the sequence is WAATARALQLDTGNLHRLAK.

It participates in nitrogen metabolism; nitric oxide reduction. In terms of biological role, required for the expression of anaerobic nitric oxide (NO) reductase, acts as a transcriptional activator for at least the norVW operon. Activation also requires sigma-54. The polypeptide is Anaerobic nitric oxide reductase transcription regulator NorR (Aliivibrio fischeri (strain ATCC 700601 / ES114) (Vibrio fischeri)).